A 332-amino-acid chain; its full sequence is Holliday junction branch migration complex subunit RuvB (332 aa).

Residues 1 to 181 (MSRILDNEIM…FGITGHMEYY (181 aa)) are large ATPase domain (RuvB-L). Residues L20, R21, G62, K65, T66, T67, 128–130 (EDF), R171, Y181, and R218 each bind ATP. T66 provides a ligand contact to Mg(2+). Residues 182-252 (AHADLTEIVE…ITDKALTMLD (71 aa)) form a small ATPAse domain (RuvB-S) region. The head domain (RuvB-H) stretch occupies residues 255–332 (HEGLDYVDQK…EHLGYEYNEK (78 aa)). R291, R310, R312, and R315 together coordinate DNA.

Belongs to the RuvB family. Homohexamer. Forms an RuvA(8)-RuvB(12)-Holliday junction (HJ) complex. HJ DNA is sandwiched between 2 RuvA tetramers; dsDNA enters through RuvA and exits via RuvB. An RuvB hexamer assembles on each DNA strand where it exits the tetramer. Each RuvB hexamer is contacted by two RuvA subunits (via domain III) on 2 adjacent RuvB subunits; this complex drives branch migration. In the full resolvosome a probable DNA-RuvA(4)-RuvB(12)-RuvC(2) complex forms which resolves the HJ.

It localises to the cytoplasm. The enzyme catalyses ATP + H2O = ADP + phosphate + H(+). In terms of biological role, the RuvA-RuvB-RuvC complex processes Holliday junction (HJ) DNA during genetic recombination and DNA repair, while the RuvA-RuvB complex plays an important role in the rescue of blocked DNA replication forks via replication fork reversal (RFR). RuvA specifically binds to HJ cruciform DNA, conferring on it an open structure. The RuvB hexamer acts as an ATP-dependent pump, pulling dsDNA into and through the RuvAB complex. RuvB forms 2 homohexamers on either side of HJ DNA bound by 1 or 2 RuvA tetramers; 4 subunits per hexamer contact DNA at a time. Coordinated motions by a converter formed by DNA-disengaged RuvB subunits stimulates ATP hydrolysis and nucleotide exchange. Immobilization of the converter enables RuvB to convert the ATP-contained energy into a lever motion, pulling 2 nucleotides of DNA out of the RuvA tetramer per ATP hydrolyzed, thus driving DNA branch migration. The RuvB motors rotate together with the DNA substrate, which together with the progressing nucleotide cycle form the mechanistic basis for DNA recombination by continuous HJ branch migration. Branch migration allows RuvC to scan DNA until it finds its consensus sequence, where it cleaves and resolves cruciform DNA. The protein is Holliday junction branch migration complex subunit RuvB of Streptococcus pneumoniae (strain CGSP14).